The following is a 363-amino-acid chain: Anthranilate phosphoribosyltransferase (363 aa).

5-phospho-alpha-D-ribose 1-diphosphate-binding positions include Gly85, 88–89 (GD), Thr93, 95–98 (NVST), 113–121 (KHGNRALSS), and Ala125. Gly85 lines the anthranilate pocket. Ser97 is a Mg(2+) binding site. Anthranilate is bound at residue Asn116. Arg171 contributes to the anthranilate binding site. Residues Asp233 and Glu234 each coordinate Mg(2+).

The protein belongs to the anthranilate phosphoribosyltransferase family. As to quaternary structure, homodimer. Mg(2+) serves as cofactor.

The catalysed reaction is N-(5-phospho-beta-D-ribosyl)anthranilate + diphosphate = 5-phospho-alpha-D-ribose 1-diphosphate + anthranilate. The protein operates within amino-acid biosynthesis; L-tryptophan biosynthesis; L-tryptophan from chorismate: step 2/5. Its function is as follows. Catalyzes the transfer of the phosphoribosyl group of 5-phosphorylribose-1-pyrophosphate (PRPP) to anthranilate to yield N-(5'-phosphoribosyl)-anthranilate (PRA). This Gluconobacter oxydans (strain 621H) (Gluconobacter suboxydans) protein is Anthranilate phosphoribosyltransferase.